The sequence spans 226 residues: MYTLIIPAAGQGKRMGAGKNKLFLLINEVPIIVHTLRAFEKDEACEKIIMAINEQERSDFEALIQKYGIRKNVQFIQGGAERQDSVYHALQYVKETEYVLVHDGARPFVTNKMIHEVLIVAKEKGASICAVPVKDTIKKVVNDAVFETVERSQLRAVQTPQGFSVALLLEAHQSAKQSGFLGTDDASLVERIGKEVGVVEGSYYNIKVTTPEDLLIAESFLHVQRR.

Belongs to the IspD/TarI cytidylyltransferase family. IspD subfamily.

The enzyme catalyses 2-C-methyl-D-erythritol 4-phosphate + CTP + H(+) = 4-CDP-2-C-methyl-D-erythritol + diphosphate. Its pathway is isoprenoid biosynthesis; isopentenyl diphosphate biosynthesis via DXP pathway; isopentenyl diphosphate from 1-deoxy-D-xylulose 5-phosphate: step 2/6. Catalyzes the formation of 4-diphosphocytidyl-2-C-methyl-D-erythritol from CTP and 2-C-methyl-D-erythritol 4-phosphate (MEP). The polypeptide is 2-C-methyl-D-erythritol 4-phosphate cytidylyltransferase (Bacillus cytotoxicus (strain DSM 22905 / CIP 110041 / 391-98 / NVH 391-98)).